The primary structure comprises 545 residues: MALPSPASEEAEGPCQEANQEYQEPVCSPVPEPEPEPEPEPEPEPEPVPVPPPEPQPEPEPQPLPDPAPLPVLGFEAEPVQEPEPTPTVETRGTARGFQPPEGGFGWIVVFAATWCNGSIFGIHNSVGILYSMLLEEEKEKNRQVEFQAAWVGALAMGMIFFCSPIVSIFTDRLGCRITATTGAAVAFIGLHTSSFTSSLSLRYFTYGILFGCGCSFAFQPSLVILGHYFQRRLGLANGVVSAGSSIFSMSFPFLIKMLGDRIKLAQTFQVLSTFMFVLTLLSLTYRPLLPSSQDTPSKRGAHTLRQRFLVQFRKYFNMRVFRQRTYRIWAFGIAAAALGYFVPYVHLMKYVEDKFKEIKETWVLLVCIGATSGLGRLVSGHISDSIPGLKKIYLQVLSFLLLGLMSMMIPLCRDFGGLIVVCLFLGLCDGFFITIMAPIAFELVGPMQASQAIGYLLGMMALPMIAGPPIAGLLRNCFGNYHVAFYFAGVPPIIGAVILFFVPLMHQRMFKKEQRESSKDKMLSHDPDPNGELLPGSPTPEEPI.

The tract at residues 1–98 (MALPSPASEE…VETRGTARGF (98 aa)) is disordered. N-acetylalanine is present on alanine 2. Topologically, residues 2–102 (ALPSPASEEA…GTARGFQPPE (101 aa)) are cytoplasmic. A run of 2 repeats spans residues 29–50 (PVPE…PVPV) and 51–72 (PPPE…PLPV). Residues 29-72 (PVPEPEPEPEPEPEPEPEPVPVPPPEPQPEPEPQPLPDPAPLPV) are 2 X 22 AA approximate tandem repeats. Over residues 33 to 45 (PEPEPEPEPEPEP) the composition is skewed to acidic residues. Residues 46–70 (EPVPVPPPEPQPEPEPQPLPDPAPL) are compositionally biased toward pro residues. Residues 103–123 (GGFGWIVVFAATWCNGSIFGI) form a helical membrane-spanning segment. Residues 124–149 (HNSVGILYSMLLEEEKEKNRQVEFQA) lie on the Extracellular side of the membrane. The chain crosses the membrane as a helical span at residues 150–170 (AWVGALAMGMIFFCSPIVSIF). At 171–181 (TDRLGCRITAT) the chain is on the cytoplasmic side. A helical transmembrane segment spans residues 182 to 202 (TGAAVAFIGLHTSSFTSSLSL). Topologically, residues 203–204 (RY) are extracellular. Residues 205–225 (FTYGILFGCGCSFAFQPSLVI) traverse the membrane as a helical segment. Over 226–235 (LGHYFQRRLG) the chain is Cytoplasmic. A helical membrane pass occupies residues 236–256 (LANGVVSAGSSIFSMSFPFLI). Residues 257–264 (KMLGDRIK) lie on the Extracellular side of the membrane. Residues 265–285 (LAQTFQVLSTFMFVLTLLSLT) form a helical membrane-spanning segment. At 286-328 (YRPLLPSSQDTPSKRGAHTLRQRFLVQFRKYFNMRVFRQRTYR) the chain is on the cytoplasmic side. Residues 329–349 (IWAFGIAAAALGYFVPYVHLM) form a helical membrane-spanning segment. The Extracellular portion of the chain corresponds to 350-362 (KYVEDKFKEIKET). Residues 363–383 (WVLLVCIGATSGLGRLVSGHI) traverse the membrane as a helical segment. At 384-392 (SDSIPGLKK) the chain is on the cytoplasmic side. Residues 393–413 (IYLQVLSFLLLGLMSMMIPLC) traverse the membrane as a helical segment. Topologically, residues 414–415 (RD) are extracellular. The chain crosses the membrane as a helical span at residues 416-436 (FGGLIVVCLFLGLCDGFFITI). The Cytoplasmic segment spans residues 437-453 (MAPIAFELVGPMQASQA). Residues 454–474 (IGYLLGMMALPMIAGPPIAGL) form a helical membrane-spanning segment. Over 475–483 (LRNCFGNYH) the chain is Extracellular. A helical membrane pass occupies residues 484-504 (VAFYFAGVPPIIGAVILFFVP). The Cytoplasmic segment spans residues 505–545 (LMHQRMFKKEQRESSKDKMLSHDPDPNGELLPGSPTPEEPI). The segment covering 514-529 (EQRESSKDKMLSHDPD) has biased composition (basic and acidic residues). Positions 514–545 (EQRESSKDKMLSHDPDPNGELLPGSPTPEEPI) are disordered. Threonine 540 carries the phosphothreonine modification.

It belongs to the major facilitator superfamily. Monocarboxylate porter (TC 2.A.1.13) family. Monomer. Homodimer. Homooligomer. As to expression, expressed at highest levels in liver, lower levels in brain, kidney and heart (at protein level). Expressed in microvessels of the blood-brain barrier (BBB) (at protein level).

It is found in the cell membrane. Its subcellular location is the apical cell membrane. The enzyme catalyses 3,3',5-triiodo-L-thyronine(out) = 3,3',5-triiodo-L-thyronine(in). The catalysed reaction is 3,3',5'-triiodo-L-thyronine(out) = 3,3',5'-triiodo-L-thyronine(in). It carries out the reaction L-thyroxine(out) = L-thyroxine(in). It catalyses the reaction 3,3'-diiodo-L-thyronine(out) = 3,3'-diiodo-L-thyronine(in). In terms of biological role, specific thyroid hormone transmembrane transporter, that mediates both uptake and efflux of thyroid hormone across the cell membrane independently of pH or a Na(+) gradient. Major substrates are the iodothyronines T3 and T4 and to a lesser extent rT3 and 3,3-diiodothyronine (3,3'-T2). Acts as an important mediator of thyroid hormone transport, especially T3, through the blood-brain barrier. This is Monocarboxylate transporter 8 (SLC16A2) from Rattus norvegicus (Rat).